The primary structure comprises 343 residues: KRR1 small subunit processome component homolog (343 aa).

The region spanning 125–193 (DIIKIGNLVH…VRDIVVETMN (69 aa)) is the KH domain. Residues 232-245 (NISKRKQPKVKKAK) are compositionally biased toward basic residues. The tract at residues 232-343 (NISKRKQPKV…KLLKANKKKV (112 aa)) is disordered. Residues 270 to 302 (FLNKEQKQAKRQQERSAKQADAAKRQDERRNKD) adopt a coiled-coil conformation. Residues 271 to 302 (LNKEQKQAKRQQERSAKQADAAKRQDERRNKD) are compositionally biased toward basic and acidic residues. Positions 331–343 (LKAKLLKANKKKV) are enriched in basic residues.

The protein belongs to the KRR1 family. As to quaternary structure, monomer. Component of the ribosomal small subunit (SSU) processome.

It localises to the nucleus. The protein resides in the nucleolus. Its function is as follows. Required for 40S ribosome biogenesis. Involved in nucleolar processing of pre-18S ribosomal RNA and ribosome assembly. Binds to RNA. Required for female germline development, cell viability during eye development and for survival of dividing cells and epithelial cells during early wing disk development. The chain is KRR1 small subunit processome component homolog from Drosophila ananassae (Fruit fly).